The primary structure comprises 187 residues: Aminodeoxychorismate synthase component 2 (187 aa).

Residues 1-187 (MILLIDNYDS…HQLLANFLHR (187 aa)) enclose the Glutamine amidotransferase type-1 domain. Catalysis depends on residues cysteine 79, histidine 168, and glutamate 170.

In terms of assembly, monomer. Heterodimer consisting of two non-identical subunits: a glutamine amidotransferase subunit (PabA) and a aminodeoxychorismate synthase subunit (PabB).

It carries out the reaction chorismate + L-glutamine = 4-amino-4-deoxychorismate + L-glutamate. Its pathway is cofactor biosynthesis; tetrahydrofolate biosynthesis; 4-aminobenzoate from chorismate: step 1/2. With respect to regulation, inhibited by 6-diazo-5-oxo-L-norleucine (DON). The inhibition is competitive with glutamine, but uncompetitive with chorismate. Functionally, part of a heterodimeric complex that catalyzes the two-step biosynthesis of 4-amino-4-deoxychorismate (ADC), a precursor of p-aminobenzoate (PABA) and tetrahydrofolate. In the first step, a glutamine amidotransferase (PabA) generates ammonia as a substrate that, along with chorismate, is used in the second step, catalyzed by aminodeoxychorismate synthase (PabB) to produce ADC. PabA converts glutamine into glutamate only in the presence of stoichiometric amounts of PabB. The chain is Aminodeoxychorismate synthase component 2 from Escherichia coli (strain K12).